A 397-amino-acid polypeptide reads, in one-letter code: S-adenosylmethionine synthase (397 aa).

Residue histidine 17 participates in ATP binding. Aspartate 19 lines the Mg(2+) pocket. Glutamate 45 serves as a coordination point for K(+). L-methionine contacts are provided by glutamate 58 and glutamine 101. The segment at 101–111 (QSPDIAQGVDK) is flexible loop. ATP is bound by residues 176–178 (DGK), 243–244 (RF), aspartate 252, 258–259 (RK), and lysine 279. Aspartate 252 contacts L-methionine. Lysine 283 provides a ligand contact to L-methionine.

It belongs to the AdoMet synthase family. In terms of assembly, homotetramer; dimer of dimers. Mg(2+) is required as a cofactor. It depends on K(+) as a cofactor.

The protein localises to the cytoplasm. The enzyme catalyses L-methionine + ATP + H2O = S-adenosyl-L-methionine + phosphate + diphosphate. Its pathway is amino-acid biosynthesis; S-adenosyl-L-methionine biosynthesis; S-adenosyl-L-methionine from L-methionine: step 1/1. Functionally, catalyzes the formation of S-adenosylmethionine (AdoMet) from methionine and ATP. The overall synthetic reaction is composed of two sequential steps, AdoMet formation and the subsequent tripolyphosphate hydrolysis which occurs prior to release of AdoMet from the enzyme. The chain is S-adenosylmethionine synthase from Staphylococcus aureus (strain USA300).